The sequence spans 198 residues: Na(+)-translocating NADH-quinone reductase subunit E (198 aa).

The next 6 helical transmembrane spans lie at 11-31 (SVFIENMALSFFLGMCTFLAV), 35-55 (VSTAFGLGVAVTVVLGISVPV), 77-97 (FLNFITFIGVIAALVQILEMI), 110-130 (GIFLPLITVNCAIFGGVSFMV), 140-160 (VVYGIGAGTGWMLAIVALAGI), and 176-196 (LGITFITVGLMALGFMSFSGV).

Belongs to the NqrDE/RnfAE family. Composed of six subunits; NqrA, NqrB, NqrC, NqrD, NqrE and NqrF.

The protein resides in the cell inner membrane. It carries out the reaction a ubiquinone + n Na(+)(in) + NADH + H(+) = a ubiquinol + n Na(+)(out) + NAD(+). Functionally, NQR complex catalyzes the reduction of ubiquinone-1 to ubiquinol by two successive reactions, coupled with the transport of Na(+) ions from the cytoplasm to the periplasm. NqrA to NqrE are probably involved in the second step, the conversion of ubisemiquinone to ubiquinol. This chain is Na(+)-translocating NADH-quinone reductase subunit E, found in Histophilus somni (strain 129Pt) (Haemophilus somnus).